Reading from the N-terminus, the 492-residue chain is Glutamate--cysteine ligase A, chloroplastic (492 aa).

Cys-156 and Cys-376 form a disulfide bridge.

It belongs to the carboxylate-amine ligase family. Glutamate--cysteine ligase type 2 subfamily. Homodimer or monomer when oxidized or reduced, respectively. Post-translationally, the Cys-156-Cys-376 disulfide bridge is known to modulate the enzyme activity according to the redox status. The oxidized form constitutes the active enzyme.

Its subcellular location is the plastid. It is found in the chloroplast. The enzyme catalyses L-cysteine + L-glutamate + ATP = gamma-L-glutamyl-L-cysteine + ADP + phosphate + H(+). Its pathway is sulfur metabolism; glutathione biosynthesis; glutathione from L-cysteine and L-glutamate: step 1/2. The chain is Glutamate--cysteine ligase A, chloroplastic (GSH1-1) from Oryza sativa subsp. indica (Rice).